The sequence spans 414 residues: MSYSVNTFTDYVLLFGSSSLVGKGILENLLDINLYIKNVSDLQGKLDSLSEIKGNVVLNKHVFCVNRRCINEEKSFMKTIDYINMRSVTWQGGRYYLRSRKEKDTEKVPSSPNTFCYDNFEEGFIKNTPEERGKDGYSFVYNQKQFSYTLHYACGKEKGIEIICNFTVTQLIIPRSETWPKLLPRIFSGTQKLEKFDIDNKNYVPGRSLPSLCDISTMVCSLGSTSARVRRTQVPSSFADYYLPFNLAQEFTNTTNKRLVVTTAFNNDFLSKTFEYFRIKAKLENDLDEALPNKLKELVILRPGPMCGQHGNPINVELGKENSTFLEKIFYYPHYLLVYKKKYISEARRIGLRTKLSEIIASSIYRMPGSALLGYAVPVSKVSYVASLMAIERKSKEAGPKLEVISSYQIDMIV.

Its function is as follows. May participate in the control of processing of mutational intermediates appearing during error-prone bypass of DNA damage. The polypeptide is Protein HIM1 (HIM1) (Saccharomyces cerevisiae (strain ATCC 204508 / S288c) (Baker's yeast)).